The following is a 538-amino-acid chain: Frizzled-4 (538 aa).

The signal sequence occupies residues 1–37; sequence MAWQGTGPSVRGMPGGVRLRLGLLLLQLLLLQRPALG. The Extracellular portion of the chain corresponds to 38 to 213; the sequence is FGDEEERRCD…KCGYDAGLYS (176 aa). Residues 41 to 162 enclose the FZ domain; the sequence is EEERRCDPIR…NDHNHMCMEG (122 aa). Intrachain disulfides connect Cys46–Cys107, Cys54–Cys100, Cys91–Cys129, Cys118–Cys159, Cys122–Cys146, Cys182–Cys201, Cys205–Cys283, and Cys303–Cys378. Asn60 carries N-linked (GlcNAc...) asparagine glycosylation. Asn145 carries an N-linked (GlcNAc...) asparagine glycan. The chain crosses the membrane as a helical span at residues 214-244; that stretch reads RSAKEFTDIWMAVWASLCFISTTFTVLTFLI. Residues 245-250 are Cytoplasmic-facing; it reads DSSRFS. The chain crosses the membrane as a helical span at residues 251-276; the sequence is YPERPIIFLSMCYNIYSIAYIVRLTV. At 277 to 300 the chain is on the extracellular side; sequence GRERISCDFEEAAEPVLIQEGLKN. Residues 301–334 form a helical membrane-spanning segment; it reads TGCAIIFLLMYFFGMASSIWWVILTLTWFLAAGL. Residues 335 to 337 are Cytoplasmic-facing; it reads KWG. Residues 338–366 form a helical membrane-spanning segment; it reads HEAIEMHSSYFHIAAWAIPAVKTIVILIM. Residues 367–384 lie on the Extracellular side of the membrane; sequence RLVDADELTGLCYVGNQS. Asn382 carries N-linked (GlcNAc...) asparagine glycosylation. Residues 385-419 form a helical membrane-spanning segment; the sequence is LDALTGFVVAPLFTYLVIGTLFIAAGLVALFKIRS. At 420-432 the chain is on the cytoplasmic side; the sequence is NLQKDGTKTDKLE. The helical transmembrane segment at 433 to 461 threads the bilayer; sequence RLMVKIGVFSVLYTVPATCVIACYFYEIS. The Extracellular portion of the chain corresponds to 462 to 474; the sequence is NWALFRYSADDSN. The chain crosses the membrane as a helical span at residues 475–496; sequence MAVEMLKIFMSLLVGITSGMWI. The Cytoplasmic segment spans residues 497–538; that stretch reads WSAKTLHTWQKCSNRLVNSGKVKREKRGNGWVKPGKGNETVV. Positions 500–505 match the Lys-Thr-X-X-X-Trp motif, mediates interaction with the PDZ domain of Dvl family members motif; the sequence is KTLHTW. Residues 536–538 carry the PDZ-binding motif; it reads TVV.

The protein belongs to the G-protein coupled receptor Fz/Smo family. In terms of assembly, interacts with MAGI3 and NDP. Component of a complex, at least composed of TSPAN12, FZD4 and norrin (NDP). Interacts (via FZ domain) with TSKU; TSKU competes with WNT2B for binding to FZD4, inhibiting Wnt signaling and repressing peripheral eye development. Interacts with glypican GPC3. Post-translationally, ubiquitinated by ZNRF3, leading to its degradation by the proteasome.

It is found in the cell membrane. Its function is as follows. Receptor for Wnt proteins. Most of frizzled receptors are coupled to the beta-catenin (CTNNB1) canonical signaling pathway, which leads to the activation of disheveled proteins, inhibition of GSK-3 kinase, nuclear accumulation of beta-catenin (CTNNB1) and activation of Wnt target genes. Plays a critical role in retinal vascularization by acting as a receptor for Wnt proteins and norrin (NDP). In retina, it can be both activated by Wnt protein-binding, but also by a Wnt-independent signaling via binding of norrin (NDP), promoting in both cases beta-catenin (CTNNB1) accumulation and stimulation of LEF/TCF-mediated transcriptional programs. A second signaling pathway involving PKC and calcium fluxes has been seen for some family members, but it is not yet clear if it represents a distinct pathway or if it can be integrated in the canonical pathway, as PKC seems to be required for Wnt-mediated inactivation of GSK-3 kinase. Both pathways seem to involve interactions with G-proteins. May be involved in transduction and intercellular transmission of polarity information during tissue morphogenesis and/or in differentiated tissues. This Rattus norvegicus (Rat) protein is Frizzled-4 (Fzd4).